The primary structure comprises 291 residues: Polyamine aminopropyltransferase (291 aa).

The region spanning 5–245 is the PABS domain; the sequence is PGPISLIEPL…YAVNYILGSL (241 aa). Position 36 (Gln36) interacts with S-methyl-5'-thioadenosine. Spermidine contacts are provided by His67 and Glu91. S-methyl-5'-thioadenosine is bound by residues Asp111 and 143–144; that span reads DG. The active-site Proton acceptor is Asp164.

It belongs to the spermidine/spermine synthase family. In terms of assembly, homodimer or homotetramer.

It localises to the cytoplasm. The enzyme catalyses S-adenosyl 3-(methylsulfanyl)propylamine + putrescine = S-methyl-5'-thioadenosine + spermidine + H(+). It functions in the pathway amine and polyamine biosynthesis; spermidine biosynthesis; spermidine from putrescine: step 1/1. Catalyzes the irreversible transfer of a propylamine group from the amino donor S-adenosylmethioninamine (decarboxy-AdoMet) to putrescine (1,4-diaminobutane) to yield spermidine. This chain is Polyamine aminopropyltransferase, found in Pyrobaculum neutrophilum (strain DSM 2338 / JCM 9278 / NBRC 100436 / V24Sta) (Thermoproteus neutrophilus).